The following is a 346-amino-acid chain: Holliday junction branch migration complex subunit RuvB (346 aa).

The segment at 2-183 (TDDRIIGAGA…FGIVQRLEFY (182 aa)) is large ATPase domain (RuvB-L). ATP contacts are provided by residues isoleucine 22, arginine 23, glycine 64, lysine 67, threonine 68, threonine 69, 130–132 (EDF), arginine 173, tyrosine 183, and arginine 220. Residue threonine 68 coordinates Mg(2+). Residues 184–254 (SVEELTRIVR…VAQAAMKMLK (71 aa)) are small ATPAse domain (RuvB-S). A head domain (RuvB-H) region spans residues 257 to 346 (PEGFDELDRR…DLFAEVPDVG (90 aa)). Arginine 293, arginine 312, and arginine 317 together coordinate DNA.

Belongs to the RuvB family. In terms of assembly, homohexamer. Forms an RuvA(8)-RuvB(12)-Holliday junction (HJ) complex. HJ DNA is sandwiched between 2 RuvA tetramers; dsDNA enters through RuvA and exits via RuvB. An RuvB hexamer assembles on each DNA strand where it exits the tetramer. Each RuvB hexamer is contacted by two RuvA subunits (via domain III) on 2 adjacent RuvB subunits; this complex drives branch migration. In the full resolvosome a probable DNA-RuvA(4)-RuvB(12)-RuvC(2) complex forms which resolves the HJ.

Its subcellular location is the cytoplasm. It catalyses the reaction ATP + H2O = ADP + phosphate + H(+). The RuvA-RuvB-RuvC complex processes Holliday junction (HJ) DNA during genetic recombination and DNA repair, while the RuvA-RuvB complex plays an important role in the rescue of blocked DNA replication forks via replication fork reversal (RFR). RuvA specifically binds to HJ cruciform DNA, conferring on it an open structure. The RuvB hexamer acts as an ATP-dependent pump, pulling dsDNA into and through the RuvAB complex. RuvB forms 2 homohexamers on either side of HJ DNA bound by 1 or 2 RuvA tetramers; 4 subunits per hexamer contact DNA at a time. Coordinated motions by a converter formed by DNA-disengaged RuvB subunits stimulates ATP hydrolysis and nucleotide exchange. Immobilization of the converter enables RuvB to convert the ATP-contained energy into a lever motion, pulling 2 nucleotides of DNA out of the RuvA tetramer per ATP hydrolyzed, thus driving DNA branch migration. The RuvB motors rotate together with the DNA substrate, which together with the progressing nucleotide cycle form the mechanistic basis for DNA recombination by continuous HJ branch migration. Branch migration allows RuvC to scan DNA until it finds its consensus sequence, where it cleaves and resolves cruciform DNA. This Stenotrophomonas maltophilia (strain R551-3) protein is Holliday junction branch migration complex subunit RuvB.